Here is a 161-residue protein sequence, read N- to C-terminus: MMTSEASLFLQTPQHLFCGFETCHLTSDPLQTHSWLESVQFGLNILLCTKCNQSICDVLETLLQLYFKNRHNAKFWLVPQHFLTSKPQKPNIPSDCVAPTLFFFTTDGPLCWHQKLNVPLNINYEEYIHKAITVFEKVPSLTINKDMYIKIESWKNILCLL.

This is an uncharacterized protein from Saimiri sciureus (Common squirrel monkey).